A 64-amino-acid chain; its full sequence is Translation machinery-associated protein 7B (64 aa).

Residues 1–38 (MSSHEGGKKKALKQPKKQAKEMDEEEKAFKQKQKEEQK) form a disordered region. Residues 27-38 (KAFKQKQKEEQK) are compositionally biased toward basic and acidic residues.

Belongs to the TMA7 family.

The protein is Translation machinery-associated protein 7B of Homo sapiens (Human).